Consider the following 334-residue polypeptide: Aspartate carbamoyltransferase catalytic subunit (334 aa).

R71 and T72 together coordinate carbamoyl phosphate. An L-aspartate-binding site is contributed by K99. 3 residues coordinate carbamoyl phosphate: R121, H151, and Q154. L-aspartate is bound by residues R184 and R239. Carbamoyl phosphate contacts are provided by G280 and P281.

This sequence belongs to the aspartate/ornithine carbamoyltransferase superfamily. ATCase family. In terms of assembly, heterododecamer (2C3:3R2) of six catalytic PyrB chains organized as two trimers (C3), and six regulatory PyrI chains organized as three dimers (R2).

The catalysed reaction is carbamoyl phosphate + L-aspartate = N-carbamoyl-L-aspartate + phosphate + H(+). The protein operates within pyrimidine metabolism; UMP biosynthesis via de novo pathway; (S)-dihydroorotate from bicarbonate: step 2/3. In terms of biological role, catalyzes the condensation of carbamoyl phosphate and aspartate to form carbamoyl aspartate and inorganic phosphate, the committed step in the de novo pyrimidine nucleotide biosynthesis pathway. The chain is Aspartate carbamoyltransferase catalytic subunit from Pseudomonas syringae pv. syringae (strain B728a).